Consider the following 466-residue polypeptide: Methylenetetrahydrofolate--tRNA-(uracil-5-)-methyltransferase TrmFO (466 aa).

Glycine 14–glycine 19 provides a ligand contact to FAD.

It belongs to the MnmG family. TrmFO subfamily. FAD serves as cofactor.

It is found in the cytoplasm. It catalyses the reaction uridine(54) in tRNA + (6R)-5,10-methylene-5,6,7,8-tetrahydrofolate + NADH + H(+) = 5-methyluridine(54) in tRNA + (6S)-5,6,7,8-tetrahydrofolate + NAD(+). The catalysed reaction is uridine(54) in tRNA + (6R)-5,10-methylene-5,6,7,8-tetrahydrofolate + NADPH + H(+) = 5-methyluridine(54) in tRNA + (6S)-5,6,7,8-tetrahydrofolate + NADP(+). Catalyzes the folate-dependent formation of 5-methyl-uridine at position 54 (M-5-U54) in all tRNAs. This Brucella abortus (strain 2308) protein is Methylenetetrahydrofolate--tRNA-(uracil-5-)-methyltransferase TrmFO.